We begin with the raw amino-acid sequence, 166 residues long: Lactose-binding lectin l-2 (166 aa).

An N-terminal signal peptide occupies residues 1 to 24 (MVSFKLPAFLCVAVLSSMALVSHG). 3 disulfides stabilise this stretch: Cys34-Cys45, Cys62-Cys160, and Cys136-Cys152. In terms of domain architecture, C-type lectin spans 41-161 (HKNRCYLHVA…CDLLFPSICV (121 aa)).

In terms of assembly, homodimer; disulfide-linked. In terms of tissue distribution, skin; contained within club cells which are a component of the epidermis in combination with epithelial cells and mucus cells (at protein level).

It is found in the secreted. Functionally, involved in host defense at the body surface. Causes agglutination and suppresses the growth of the Gram-negative bacterium E.coli K12. Possesses calcium-independent hemagglutinating activity. The sequence is that of Lactose-binding lectin l-2 from Anguilla japonica (Japanese eel).